Consider the following 859-residue polypeptide: Anoctamin-7 (859 aa).

At 1–297 (MLRGQAREED…YFAWLGFYTG (297 aa)) the chain is on the cytoplasmic side. The tract at residues 25–50 (GCSYGSTAQASEAGKQQVAPSRVGSS) is disordered. Residues 298–318 (WLLPAAVVGTVVFLVGCFLVF) traverse the membrane as a helical segment. Topologically, residues 319-362 (SDIPTQELCHSSDSFDMCPLCSDCSFWLLSSACTLAQAGRLFDH) are extracellular. Residues 363–383 (GGTVFFSLFMALWAVLLLEYW) traverse the membrane as a helical segment. At 384 to 441 (KRKNATLAYRWDCSDYEDIEERPRPQFAATAPMTALNPITGEDEPYFPEKNRVRRMLA) the chain is on the cytoplasmic side. Residues 442–462 (GSVVLLMMVAVVIMCLVSVIL) traverse the membrane as a helical segment. At 463–492 (YRAVMAIIVSRSDNAFLSAWASRIASLTGS) the chain is on the extracellular side. The helical transmembrane segment at 493-513 (VVNLVFILILSKVYVLLAQVL) threads the bilayer. Over 514–530 (TRWEMHRTQTEFEDAFT) the chain is Cytoplasmic. Residues 531–551 (LKVFIFQFVNFYASPVYIAFF) traverse the membrane as a helical segment. The Extracellular portion of the chain corresponds to 552–651 (KGRFVGYPGN…FHEYLEMVLQ (100 aa)). Residues 652 to 672 (FGFVTIFVAACPLAPLFALLN) traverse the membrane as a helical segment. Topologically, residues 673–700 (NWVEIRLDARKFVCEYRRPVAERAQDIG) are cytoplasmic. A helical transmembrane segment spans residues 701–721 (IWFHILTGLTHLAVISNAFLL). The Extracellular portion of the chain corresponds to 722-780 (AFSSDFLPRVYYSWTHAPDLHGFLNFTLARAPPTFTSAHNRTCRYRAFRDDDGHYSPTY). Residues asparagine 746 and asparagine 761 are each glycosylated (N-linked (GlcNAc...) asparagine). A helical transmembrane segment spans residues 781–801 (WTLLAIRLAFVIVFEHVVFSI). Topologically, residues 802–859 (GRVLDLLVPDIPESVEIKVKREYYLAKQALAENEALLGATGVKDDQPPSSEPSLGLPA) are cytoplasmic.

The protein belongs to the anoctamin family. Highly expressed in the stomach. Expressed at low levels in small intestine and large intestine.

Its subcellular location is the cell membrane. It is found in the endoplasmic reticulum. It catalyses the reaction a 1,2-diacyl-sn-glycero-3-phospho-L-serine(in) = a 1,2-diacyl-sn-glycero-3-phospho-L-serine(out). The catalysed reaction is a beta-D-galactosyl-(1&lt;-&gt;1')-N-acylsphing-4-enine(out) = a beta-D-galactosyl-(1&lt;-&gt;1')-N-acylsphing-4-enine(in). The enzyme catalyses a 1,2-diacyl-sn-glycero-3-phosphocholine(in) = a 1,2-diacyl-sn-glycero-3-phosphocholine(out). In terms of biological role, has calcium-dependent phospholipid scramblase activity; scrambles phosphatidylserine, phosphatidylcholine and galactosylceramide. Does not exhibit calcium-activated chloride channel (CaCC) activity. May play a role in cell-cell interactions. The chain is Anoctamin-7 (Ano7) from Mus musculus (Mouse).